The primary structure comprises 145 residues: Globin (145 aa).

S2 is modified (N-acetylserine). One can recognise a Globin domain in the interval 2–145 (SLSAAEADLV…IVAALKAAGK (144 aa)). H96 contributes to the heme b binding site.

It belongs to the globin family. As to quaternary structure, monomer.

The sequence is that of Globin from Aplysia kurodai (Kuroda's sea hare).